A 165-amino-acid polypeptide reads, in one-letter code: Transcription factor zip-10 (165 aa).

The span at 53-71 (ASLGTSTTSSSRCSSTESS) shows a compositional bias: low complexity. The interval 53–99 (ASLGTSTTSSSRCSSTESSAAPGKIRRGRPQQEIADGQDAHSQKKRH) is disordered. Positions 104-150 (ARQYRAQMRQKVENVKSLHDEKEQLELEVKALRQAVSGLQQENAQKD) form a coiled coil.

Its subcellular location is the nucleus. In terms of biological role, transcription factor that regulates the expression of genes in response to changes in temperature. In particular, binds to the promoter region of genes such as asp-17 in response to severe cold to warm temperature transitions to promote gene expression. Promotes stress-induced death, particularly in older animals, following cold shock followed by warming and this may have evolved as a form of kin survival under thermal stress conditions, favoring the survival of younger animals. This is Transcription factor zip-10 from Caenorhabditis elegans.